The following is a 1933-amino-acid chain: WD repeat-containing protein 81 (1933 aa).

The necessary and sufficient for the interaction with SQSTM1 stretch occupies residues Met-1–Glu-643. Disordered stretches follow at residues Pro-305–Cys-334, Ser-663–Val-714, Cys-1038–Gly-1057, Gln-1090–Glu-1209, Ser-1517–Gln-1544, and Asp-1565–Glu-1590. A compositionally biased stretch (basic and acidic residues) spans Ser-314–Gly-330. The region spanning Gly-333–Gln-610 is the BEACH domain. Residues Ala-668–Arg-693 show a composition bias toward low complexity. 2 stretches are compositionally biased toward polar residues: residues Gly-1100 to Ser-1112 and Val-1131 to Leu-1140. Residues Gly-1145–Glu-1166 show a composition bias toward acidic residues. 5 WD repeats span residues Gly-1638 to Ser-1677, Ile-1684 to Thr-1724, Leu-1776 to Gly-1815, Ala-1818 to His-1856, and Asn-1903 to Ala-1933.

This sequence belongs to the WD repeat WDR81 family. In terms of assembly, interacts with WDR91; involved in early to late endosome cargo transport. Interacts with BECN1; negatively regulates the PI3 kinase/PI3K activity associated with endosomal membranes. Interacts with SQSTM1; the interaction is direct and regulates the interaction of SQSTM1 with ubiquitinated proteins. Interacts with MAP1LC3C; recruits MAP1LC3C to ubiquitinated protein aggregates in the aggrephagy process.

The protein resides in the early endosome membrane. It localises to the late endosome membrane. It is found in the lysosome membrane. Its subcellular location is the cytoplasmic vesicle. The protein localises to the autophagosome membrane. The protein resides in the mitochondrion. It localises to the cytoplasm. It is found in the cytosol. Functionally, functions as a negative regulator of the PI3 kinase/PI3K activity associated with endosomal membranes via BECN1, a core subunit of the PI3K complex. By modifying the phosphatidylinositol 3-phosphate/PtdInsP3 content of endosomal membranes may regulate endosome fusion, recycling, sorting and early to late endosome transport. It is for instance, required for the delivery of cargos like BST2/tetherin from early to late endosome and thereby participates indirectly to their degradation by the lysosome. May also play a role in aggrephagy, the macroautophagic degradation of ubiquitinated protein aggregates. In this process, may regulate the interaction of SQSTM1 with ubiquitinated proteins and also recruit MAP1LC3C. May also be involved in maintenance of normal mitochondrial structure and organization. The sequence is that of WD repeat-containing protein 81 from Rattus norvegicus (Rat).